Reading from the N-terminus, the 191-residue chain is Thymidine kinase (191 aa).

ATP-binding positions include 15–22 (GPMYSGKT) and 88–91 (DEAQ). The active-site Proton acceptor is glutamate 89. The Zn(2+) site is built by cysteine 145, cysteine 148, cysteine 183, and cysteine 186.

It belongs to the thymidine kinase family. As to quaternary structure, homotetramer.

The protein resides in the cytoplasm. The enzyme catalyses thymidine + ATP = dTMP + ADP + H(+). The polypeptide is Thymidine kinase (Clostridium botulinum (strain Loch Maree / Type A3)).